Here is a 489-residue protein sequence, read N- to C-terminus: 6-phosphogluconate dehydrogenase, decarboxylating 1 (489 aa).

Residues 9–14 (GLAVMG) and 32–34 (NRT) contribute to the NADP(+) site. Ser-50 carries the post-translational modification Phosphoserine. Residues 74 to 76 (VKA) and Asn-102 each bind NADP(+). Substrate-binding positions include Asn-102 and 128–130 (SGG). The active-site Proton acceptor is Lys-182. Substrate is bound at residue 185–186 (HN). Glu-189 (proton donor) is an active-site residue. Residues Tyr-190, Lys-259, Arg-286, Arg-446, and His-452 each contribute to the substrate site.

This sequence belongs to the 6-phosphogluconate dehydrogenase family. In terms of assembly, homodimer.

It localises to the cytoplasm. The enzyme catalyses 6-phospho-D-gluconate + NADP(+) = D-ribulose 5-phosphate + CO2 + NADPH. It functions in the pathway carbohydrate degradation; pentose phosphate pathway; D-ribulose 5-phosphate from D-glucose 6-phosphate (oxidative stage): step 3/3. In terms of biological role, catalyzes the oxidative decarboxylation of 6-phosphogluconate to ribulose 5-phosphate and CO(2), with concomitant reduction of NADP to NADPH. The sequence is that of 6-phosphogluconate dehydrogenase, decarboxylating 1 (GND1) from Saccharomyces cerevisiae (strain ATCC 204508 / S288c) (Baker's yeast).